Here is a 401-residue protein sequence, read N- to C-terminus: L-rhamnonate dehydratase (401 aa).

Substrate is bound by residues His29 and Arg55. Positions 222, 248, and 276 each coordinate Mg(2+). His325 serves as the catalytic Proton acceptor. Residue Glu345 coordinates substrate.

Belongs to the mandelate racemase/muconate lactonizing enzyme family. RhamD subfamily. As to quaternary structure, homooctamer; tetramer of dimers. Mg(2+) serves as cofactor.

The catalysed reaction is L-rhamnonate = 2-dehydro-3-deoxy-L-rhamnonate + H2O. In terms of biological role, catalyzes the dehydration of L-rhamnonate to 2-keto-3-deoxy-L-rhamnonate (KDR). The sequence is that of L-rhamnonate dehydratase from Salmonella schwarzengrund (strain CVM19633).